The following is a 122-amino-acid chain: Putative ankyrin repeat protein L22 (122 aa).

ANK repeat units lie at residues 3-32 (DNNY…DIKA), 33-62 (DDDY…DIRV), 63-92 (NNDY…NIRA), and 94-122 (DDYA…VLNQ).

In Acanthamoeba polyphaga (Amoeba), this protein is Putative ankyrin repeat protein L22.